Here is a 101-residue protein sequence, read N- to C-terminus: uncharacterized protein (101 aa).

The chain crosses the membrane as a helical span at residues 17 to 37 (VIKILLISGISRIIILILAMF).

It is found in the endoplasmic reticulum membrane. This is an uncharacterized protein from Schizosaccharomyces pombe (strain 972 / ATCC 24843) (Fission yeast).